Here is an 881-residue protein sequence, read N- to C-terminus: MERKSSSEIRRMYLDFFKSKGHIIEPSASLVPQDDPTLLWINSGVATMKKYFDGSVVPEVPRLTSSQKSIRTNDIENVGHTARHHTLFEMLGNFSVGDYFKEEAIHWAWELLTSKEWYGMDPEKLYVTVYPKDEEAKKIWLETPIDPSHIVKVEDNFWDIGEGPSGPDSEIFYDRGEAFNNLEDDDPENYPGGENERWLEIWNIVFSQFNHKPDGTYEPLPHKNIDTGMGLERVVSVFQDAPTNFETDLFLPIIHEVEKLSGKKYGENKESDISFKVIADHARAITFAIGDGAIPSNEGRGYVIRRLLRRAVMHGKQLGVNETFLYKMVPVVGEIMKDYYPEVLADQDYIAKVIKSEEDRFSETLTDGLELLNTIIDETKTKGSDTISGFDAFRLFDTYGFPLELAKEYASDKGLKVDEAGFEDEMQKQKERARSARSTEKSMGVQSDLLTDLKTESKYVGYDTLRVDNAILENVIQDGKLTDIVEPGEARVLFNITPFYAEMGGQVADQGEIRDANGEIVAEVIDVQHAPNGQNLHTIKALKKMHSGAAYTLEVNRAFHLKVEKNHTATHLLDQALRDILGDHTQQAGSLVEPGYLRFDFTHFGQVTNEDLDRVEKIINEKIYDEIPVTTVETDLETGKKMGAIALFNDKYGKKVRVVGIGDYSKEFCGGTHVKNTNEIGLFKIVSESGVGAGVRRIEAVTSQAALEFLNTEENLLKQTAGLLKSAQLKDVPTKTEQLQSNVKALTQKISQLEAKIAKSQAANIGDEMVEINGVRLIAADVQVSGMDQLRQMADDWKNKDQSDVLVLAAKIGEKANLIAAVKDDFVKKGLKAGDLIKAIAPKVNGGGGGRPNMAQAGGSNPDNIKAALQAAREWLESQNG.

A compositionally biased stretch (basic and acidic residues) spans 422-440; that stretch reads FEDEMQKQKERARSARSTE. Positions 422 to 445 are disordered; it reads FEDEMQKQKERARSARSTEKSMGV. Positions 567, 571, 669, and 673 each coordinate Zn(2+).

Belongs to the class-II aminoacyl-tRNA synthetase family. It depends on Zn(2+) as a cofactor.

The protein localises to the cytoplasm. It carries out the reaction tRNA(Ala) + L-alanine + ATP = L-alanyl-tRNA(Ala) + AMP + diphosphate. Catalyzes the attachment of alanine to tRNA(Ala) in a two-step reaction: alanine is first activated by ATP to form Ala-AMP and then transferred to the acceptor end of tRNA(Ala). Also edits incorrectly charged Ser-tRNA(Ala) and Gly-tRNA(Ala) via its editing domain. This Pediococcus pentosaceus (strain ATCC 25745 / CCUG 21536 / LMG 10740 / 183-1w) protein is Alanine--tRNA ligase.